A 446-amino-acid chain; its full sequence is Phosphoglucosamine mutase (446 aa).

Ser-102 acts as the Phosphoserine intermediate in catalysis. Positions 102, 241, 243, and 245 each coordinate Mg(2+). Ser-102 carries the post-translational modification Phosphoserine.

Belongs to the phosphohexose mutase family. The cofactor is Mg(2+). Post-translationally, activated by phosphorylation.

The catalysed reaction is alpha-D-glucosamine 1-phosphate = D-glucosamine 6-phosphate. In terms of biological role, catalyzes the conversion of glucosamine-6-phosphate to glucosamine-1-phosphate. This is Phosphoglucosamine mutase from Xylella fastidiosa (strain M12).